Here is a 181-residue protein sequence, read N- to C-terminus: Ferritin heavy chain (181 aa).

The residue at position 1 (M1) is an N-acetylmethionine. At T2 the chain carries N-acetylthreonine; in Ferritin heavy chain, N-terminally processed. The region spanning 11–160 (QNYHQDSEAA…DHITNLRKMG (150 aa)) is the Ferritin-like diiron domain. Fe cation is bound by residues E28, E63, H66, E108, and Q142. Phosphoserine is present on S179.

It belongs to the ferritin family. In terms of assembly, oligomer of 24 subunits. There are two types of subunits: L (light) chain and H (heavy) chain. The major chain can be light or heavy, depending on the species and tissue type. The functional molecule forms a roughly spherical shell with a diameter of 12 nm and contains a central cavity into which the insoluble mineral iron core is deposited. Interacts with NCOA4; NCOA4 promotes targeting of the iron-binding ferritin complex to autolysosomes following starvation or iron depletion.

Its subcellular location is the cytoplasm. It is found in the lysosome. The protein resides in the cytoplasmic vesicle. The protein localises to the autophagosome. It carries out the reaction 4 Fe(2+) + O2 + 4 H(+) = 4 Fe(3+) + 2 H2O. Stores iron in a soluble, non-toxic, readily available form. Important for iron homeostasis. Has ferroxidase activity. Iron is taken up in the ferrous form and deposited as ferric hydroxides after oxidation. Also plays a role in delivery of iron to cells. Mediates iron uptake in capsule cells of the developing kidney. Delivery to lysosomes is mediated by the cargo receptor NCOA4 for autophagic degradation and release of iron. In Bos taurus (Bovine), this protein is Ferritin heavy chain (FTH1).